A 96-amino-acid chain; its full sequence is MRNYELMIILDPEVDERTVAPSLDKFLSVIKTGGGSVDNVDIWGKRRLAYEINKRAEGIYAVVNLTATPDLAKELDRQLGLNEAVLRTKLIRPDAH.

This sequence belongs to the bacterial ribosomal protein bS6 family.

In terms of biological role, binds together with bS18 to 16S ribosomal RNA. This chain is Small ribosomal subunit protein bS6, found in Beutenbergia cavernae (strain ATCC BAA-8 / DSM 12333 / CCUG 43141 / JCM 11478 / NBRC 16432 / NCIMB 13614 / HKI 0122).